Consider the following 96-residue polypeptide: Small ribosomal subunit protein bS6 (96 aa).

The protein belongs to the bacterial ribosomal protein bS6 family.

Functionally, binds together with bS18 to 16S ribosomal RNA. The chain is Small ribosomal subunit protein bS6 (rpsF) from Mycobacterium bovis (strain ATCC BAA-935 / AF2122/97).